A 279-amino-acid chain; its full sequence is Dehydrogenase/reductase SDR family member 4 (279 aa).

37-61 (LVTASTDGIGFAIARRLAEDGAHVV) serves as a coordination point for NADP(+). Lys93 carries the post-translational modification N6-acetyllysine; alternate. Lys93 bears the N6-succinyllysine; alternate mark. Position 106 is an N6-acetyllysine (Lys106). Substrate is bound at residue Ser170. Tyr183 serves as the catalytic Proton acceptor. Residue Lys187 participates in NADP(+) binding. Residue Lys217 is modified to N6-acetyllysine; alternate. Position 217 is an N6-succinyllysine; alternate (Lys217). Ser221 carries the post-translational modification Phosphoserine. 2 positions are modified to N6-succinyllysine: Lys228 and Lys235. Residues 277–279 (SRL) carry the Peroxisomal targeting signal motif.

This sequence belongs to the short-chain dehydrogenases/reductases (SDR) family. In terms of assembly, homotetramer.

It localises to the peroxisome. The catalysed reaction is a secondary alcohol + NADP(+) = a ketone + NADPH + H(+). The enzyme catalyses 3alpha-hydroxy-5beta-pregnan-20-one + NADP(+) = 5beta-pregnan-3,20-dione + NADPH + H(+). It carries out the reaction 5beta-dihydrotestosterone + NADPH + H(+) = 5beta-androstane-3alpha,17beta-diol + NADP(+). It catalyses the reaction all-trans-retinol + NADP(+) = all-trans-retinal + NADPH + H(+). The catalysed reaction is isatin + NADPH + H(+) = 3-hydroxyindolin-2-one + NADP(+). NADPH-dependent oxidoreductase which catalyzes the reduction of a variety of compounds bearing carbonyl groups including ketosteroids, alpha-dicarbonyl compounds, aldehydes, aromatic ketones and quinones. Reduces all-trans-retinal and 9-cis retinal. Reduces 3-ketosteroids and benzil into 3alpha-hydroxysteroids and S-benzoin, respectively, in contrast to the stereoselectivity of primates DHRS4s which produce 3beta-hydroxysteroids and R-benzoin. In the reverse reaction, catalyzes the NADP-dependent oxidation of 3alpha-hydroxysteroids and alcohol, but with much lower efficiency. Involved in the metabolism of 3alpha-hydroxysteroids, retinoid, isatin and xenobiotic carbonyl compounds. In Mus musculus (Mouse), this protein is Dehydrogenase/reductase SDR family member 4.